A 45-amino-acid chain; its full sequence is Osteocalcin (45 aa).

In terms of domain architecture, Gla spans 1–44 (AGTAXGDLTPFQLESLREVCEVNLACEHMADTXGIVAAYTAYYG). Positions 14, 18, 21, and 27 each coordinate Ca(2+). 4-carboxyglutamate occurs at positions 14, 18, and 21. Cysteine 20 and cysteine 26 are disulfide-bonded.

This sequence belongs to the osteocalcin/matrix Gla protein family. Gamma-carboxyglutamate residues are formed by vitamin K dependent carboxylation by GGCX. These residues are essential for the binding of calcium.

The protein resides in the secreted. Its function is as follows. The carboxylated form is one of the main organic components of the bone matrix, which constitutes 1-2% of the total bone protein. The carboxylated form binds strongly to apatite and calcium. This Danio rerio (Zebrafish) protein is Osteocalcin (bglap).